Reading from the N-terminus, the 213-residue chain is Thymidylate kinase (213 aa).

Residue 10–17 coordinates ATP; it reads GLEGAGKT.

The protein belongs to the thymidylate kinase family.

The enzyme catalyses dTMP + ATP = dTDP + ADP. Functionally, phosphorylation of dTMP to form dTDP in both de novo and salvage pathways of dTTP synthesis. The polypeptide is Thymidylate kinase (Escherichia coli O157:H7 (strain EC4115 / EHEC)).